Here is an 83-residue protein sequence, read N- to C-terminus: Small ribosomal subunit protein bS16 (83 aa).

The protein belongs to the bacterial ribosomal protein bS16 family.

The sequence is that of Small ribosomal subunit protein bS16 from Ectopseudomonas mendocina (strain ymp) (Pseudomonas mendocina).